Consider the following 210-residue polypeptide: Actin-related protein 3C (210 aa).

Positions 1 to 21 (MFESFNVPGLYIAVQAVLALA) are cleaved as a signal peptide.

Belongs to the actin family. As to expression, expressed in kidney, stomach, spleen, bone marrow, uterus, testis, placenta, skeletal muscle, mammary gland, lung, fetal liver, and fetal kidney, but not detected in small intestine, brain, and thymus. Expressed in low-metastatic lung adenocarcinoma cells but not in high-metastatic ones.

May play a role in the suppression of metastatic potential in lung adenoma carcinoma cells. In Homo sapiens (Human), this protein is Actin-related protein 3C (ACTR3C).